Reading from the N-terminus, the 628-residue chain is CMP-5'-(3-aminopropyl)phosphonate synthase (628 aa).

Positions 1 to 255 (MNENRTFATP…DPGDQRQADF (255 aa)) are mobA-like NTP transferase. The decarboxylase stretch occupies residues 278 to 628 (GVTDHALLYN…TTEGAGRADG (351 aa)). An N6-(pyridoxal phosphate)lysine modification is found at K466.

This sequence in the N-terminal section; belongs to the MobA family. In the C-terminal section; belongs to the class-I pyridoxal-phosphate-dependent aminotransferase family. The cofactor is Mg(2+). Pyridoxal 5'-phosphate serves as cofactor.

It catalyses the reaction 2-amino-4-phosphonobutanoate + CTP = CMP-5'-(3-amino-3-carboxypropyl)phosphonate + diphosphate. The enzyme catalyses CMP-5'-(3-amino-3-carboxypropyl)phosphonate + H(+) = CMP-5'-(3-aminopropyl)phosphonate + CO2. Its pathway is antibiotic biosynthesis. Functionally, bifunctional cytidylyltransferase/decarboxylase involved in the biosynthesis of the phosphonate antibiotic FR-900098, a potent antimalarial agent that acts as an inhibitor of 1-deoxy-D-xylulose 5-phosphate reductoisomerase (DXR), the first enzyme in the nonmevalonate pathway for isoprenoid biosynthesis. Catalyzes the condensation of 2-amino-4-phosphonobutyrate (2APn) and CTP to form CMP-5'-2APn and then decarboxylates CMP-5'-2APn to yield CMP-5'-(3-aminopropyl)phosphonate (CMP-5'-3APn). The protein is CMP-5'-(3-aminopropyl)phosphonate synthase of Streptomyces rubellomurinus (strain ATCC 31215).